A 282-amino-acid polypeptide reads, in one-letter code: Glutamyl endopeptidase (282 aa).

The first 27 residues, M1–A27, serve as a signal peptide directing secretion. Positions K28 to S66 are excised as a propeptide. Residues H117, D159, and S235 each act as charge relay system in the active site.

This sequence belongs to the peptidase S1B family.

It is found in the secreted. The catalysed reaction is Preferential cleavage: Glu-|-Xaa, Asp-|-Xaa.. Its function is as follows. Exhibits a significant hydrolytic activity for the carbonyl side of glutamic acid. Shows activity toward human fibronectin and type 1 collagen. This is Glutamyl endopeptidase (gseA) from Staphylococcus epidermidis (strain ATCC 35984 / DSM 28319 / BCRC 17069 / CCUG 31568 / BM 3577 / RP62A).